A 327-amino-acid chain; its full sequence is MTAAAGNKDHQKVILVGDGAVGSSYAFALVTQNIAQEVGIIDINVPKTEGDALDLSHALAFTSPKKIYAATYDDCHDADLVVLTAGAPQKPGETRLDLVHKNLKINKEIVTTIVDSGFNGIFLVAANPVDILTYSTWKFSGFPKERVIGSGTSLDSARFRQAIAELVDVDARNVHAYILGEHGDTEFPVWSHANVAGLQIYEWVKNNPDVDEEAMVNLFFNVRDAAYTIIEKKGATFYGIAVALARITKAILNDENSVLPLSVYLEGEYGQNDIYIGAPAIINRQGVKQVIEIPLTDAEQEKMEASASALKEVIETAFAKFEAEEAK.

NAD(+) contacts are provided by residues Val-21, Asp-42, Lys-47, Tyr-72, and 86–87; that span reads GA. Substrate contacts are provided by residues Gln-89, Arg-95, and 127–130; that span reads NPVD. NAD(+) contacts are provided by residues 125–127 and Ser-150; that span reads AAN. 155-158 provides a ligand contact to substrate; sequence DSAR. Beta-D-fructose 1,6-bisphosphate-binding residues include Arg-160 and His-175. Residue His-182 is the Proton acceptor of the active site. Position 227 is a phosphotyrosine (Tyr-227). Thr-236 is a substrate binding site.

The protein belongs to the LDH/MDH superfamily. LDH family. As to quaternary structure, homotetramer.

The protein resides in the cytoplasm. It catalyses the reaction (S)-lactate + NAD(+) = pyruvate + NADH + H(+). The protein operates within fermentation; pyruvate fermentation to lactate; (S)-lactate from pyruvate: step 1/1. Its activity is regulated as follows. Allosterically activated by fructose 1,6-bisphosphate (FBP). In terms of biological role, catalyzes the conversion of lactate to pyruvate. The sequence is that of L-lactate dehydrogenase 1 from Enterococcus faecalis (strain ATCC 700802 / V583).